The sequence spans 257 residues: Imidazole glycerol phosphate synthase subunit HisF (257 aa).

Catalysis depends on residues Asp-11 and Asp-130.

This sequence belongs to the HisA/HisF family. In terms of assembly, heterodimer of HisH and HisF.

The protein resides in the cytoplasm. The enzyme catalyses 5-[(5-phospho-1-deoxy-D-ribulos-1-ylimino)methylamino]-1-(5-phospho-beta-D-ribosyl)imidazole-4-carboxamide + L-glutamine = D-erythro-1-(imidazol-4-yl)glycerol 3-phosphate + 5-amino-1-(5-phospho-beta-D-ribosyl)imidazole-4-carboxamide + L-glutamate + H(+). The protein operates within amino-acid biosynthesis; L-histidine biosynthesis; L-histidine from 5-phospho-alpha-D-ribose 1-diphosphate: step 5/9. In terms of biological role, IGPS catalyzes the conversion of PRFAR and glutamine to IGP, AICAR and glutamate. The HisF subunit catalyzes the cyclization activity that produces IGP and AICAR from PRFAR using the ammonia provided by the HisH subunit. This chain is Imidazole glycerol phosphate synthase subunit HisF, found in Pseudoalteromonas translucida (strain TAC 125).